The primary structure comprises 182 residues: Glycerol-3-phosphate acyltransferase 1 (182 aa).

5 consecutive transmembrane segments (helical) span residues 5-25, 54-74, 81-101, 117-137, and 157-177; these read MQFLYLVASYLIGNILTAYIV, GYFIATFLGDAIKGAIVVAVA, PTFVMLTLLAVIIGHIYPVLF, IAFDYLIALTLLGIFIVFYLI, and ILYSYSIVTTILSGIIIVLIL.

The protein belongs to the PlsY family. In terms of assembly, probably interacts with PlsX.

The protein resides in the cell membrane. The enzyme catalyses an acyl phosphate + sn-glycerol 3-phosphate = a 1-acyl-sn-glycero-3-phosphate + phosphate. The protein operates within lipid metabolism; phospholipid metabolism. Its function is as follows. Catalyzes the transfer of an acyl group from acyl-phosphate (acyl-PO(4)) to glycerol-3-phosphate (G3P) to form lysophosphatidic acid (LPA). This enzyme utilizes acyl-phosphate as fatty acyl donor, but not acyl-CoA or acyl-ACP. The protein is Glycerol-3-phosphate acyltransferase 1 of Bacillus cereus (strain ATCC 14579 / DSM 31 / CCUG 7414 / JCM 2152 / NBRC 15305 / NCIMB 9373 / NCTC 2599 / NRRL B-3711).